The primary structure comprises 481 residues: Tetratricopeptide repeat protein 29 (481 aa).

Over residues 1–18 the composition is skewed to low complexity; sequence MASVGPVKTKTVTLKELT. The disordered stretch occupies residues 1-53; sequence MASVGPVKTKTVTLKELTPPIPSPEKSACKGAKPDSNHMALVPVKPSQPGSGK. TPR repeat units lie at residues 191–224, 231–264, 271–310, 317–350, 357–390, and 397–430; these read CERC…AMES, QEVR…AMAL, VEAN…SQRV, ADSL…ARAA, KRAS…SEKA, and YRAT…ARKL.

Interacts with TAX-1.

Its subcellular location is the cytoplasm. It is found in the cytoskeleton. The protein localises to the flagellum axoneme. Its function is as follows. Axonemal protein which is implicated in axonemal and/or peri-axonemal structure assembly and regulates flagellum assembly and beating. The sequence is that of Tetratricopeptide repeat protein 29 from Trypanosoma brucei brucei (strain 927/4 GUTat10.1).